The primary structure comprises 235 residues: 2,3,4,5-tetrahydropyridine-2,6-dicarboxylate N-acetyltransferase (235 aa).

Belongs to the transferase hexapeptide repeat family. DapH subfamily.

The enzyme catalyses (S)-2,3,4,5-tetrahydrodipicolinate + acetyl-CoA + H2O = L-2-acetamido-6-oxoheptanedioate + CoA. The protein operates within amino-acid biosynthesis; L-lysine biosynthesis via DAP pathway; LL-2,6-diaminopimelate from (S)-tetrahydrodipicolinate (acetylase route): step 1/3. In terms of biological role, catalyzes the transfer of an acetyl group from acetyl-CoA to tetrahydrodipicolinate. This chain is 2,3,4,5-tetrahydropyridine-2,6-dicarboxylate N-acetyltransferase, found in Exiguobacterium sp. (strain ATCC BAA-1283 / AT1b).